The following is a 441-amino-acid chain: Inner kinetochore subunit mis17 (441 aa).

Polar residues predominate over residues 160–173 (SSILENSPPNKVQR). The disordered stretch occupies residues 160–240 (SSILENSPPN…TSSMAPRNLL (81 aa)). Over residues 174–183 (LSSLDSSQDS) the composition is skewed to low complexity. A compositionally biased stretch (polar residues) spans 192–201 (VTGTTFSSQA). A compositionally biased stretch (low complexity) spans 217 to 233 (SLTNQSSSLQSSLQTSS).

The protein belongs to the CENP-U/AME1 family. Component of the heterotetrameric kinetochore subcomplex COMA, which consists of fta2, fta7, mal2 and mis17. The COMA subcomplex is part of a larger constitutive centromere-associated network (CCAN) (also known as central kinetochore Sim4 complex in fission yeast), which is composed of at least cnl2, cnp3, cnp20, fta1, fta2, fta3, fta4, fta6, fta7, mal2, mhf1, mhf2, mis6, mis15, mis17, sim4 and wip1. Interacts with mis6 and mis15.

The protein resides in the nucleus. It localises to the chromosome. The protein localises to the centromere. It is found in the kinetochore. Its function is as follows. Component of the kinetochore, a multiprotein complex that assembles on centromeric DNA and attaches chromosomes to spindle microtubules, mediating chromosome segregation and sister chromatid segregation during meiosis and mitosis. Component of the inner kinetochore COMA complex, which connects centromere-associated proteins and the outer kinetochore. COMA interacts with other inner kinetochore proteins to form the inner kinetochore constitutive centromere-associated network (CCAN), which serves as a structural platform for outer kinetochore assembly. The sequence is that of Inner kinetochore subunit mis17 (mis17) from Schizosaccharomyces pombe (strain 972 / ATCC 24843) (Fission yeast).